Here is a 137-residue protein sequence, read N- to C-terminus: NADH-ubiquinone oxidoreductase chain 3 (137 aa).

Helical transmembrane passes span 6-26 (LFIL…LIFA), 57-77 (FFIF…TFPF), and 86-106 (IYGL…FVYE).

The protein belongs to the complex I subunit 3 family.

The protein resides in the mitochondrion membrane. It carries out the reaction a ubiquinone + NADH + 5 H(+)(in) = a ubiquinol + NAD(+) + 4 H(+)(out). Its function is as follows. Core subunit of the mitochondrial membrane respiratory chain NADH dehydrogenase (Complex I) that is believed to belong to the minimal assembly required for catalysis. Complex I functions in the transfer of electrons from NADH to the respiratory chain. The immediate electron acceptor for the enzyme is believed to be ubiquinone. This Podospora anserina (strain S / ATCC MYA-4624 / DSM 980 / FGSC 10383) (Pleurage anserina) protein is NADH-ubiquinone oxidoreductase chain 3 (ND3).